The following is a 96-amino-acid chain: Evasin P1074 (96 aa).

The signal sequence occupies residues 1–28; sequence MAFNMITFLQMAVFVVILFNINLHSASA. Intrachain disulfides connect Cys-48/Cys-67, Cys-52/Cys-69, and Cys-63/Cys-80. Residue Asn-74 is glycosylated (N-linked (GlcNAc...) asparagine).

The protein resides in the secreted. In terms of biological role, salivary chemokine-binding protein which binds to host chemokines CXCL1 and CXCL8. The protein is Evasin P1074 of Ixodes ricinus (Common tick).